Reading from the N-terminus, the 131-residue chain is Profilin-2 (131 aa).

It belongs to the profilin family. Occurs in many kinds of cells as a complex with monomeric actin in a 1:1 ratio.

The protein resides in the cytoplasm. It is found in the cytoskeleton. In terms of biological role, binds to actin and affects the structure of the cytoskeleton. At high concentrations, profilin prevents the polymerization of actin, whereas it enhances it at low concentrations. By binding to PIP2, it inhibits the formation of IP3 and DG. The sequence is that of Profilin-2 from Ambrosia artemisiifolia (Common ragweed).